An 834-amino-acid chain; its full sequence is Periplasmic nitrate reductase (834 aa).

The segment at residues 1-29 (MNLTRREFAKANAAAIAAAAAGLPILVRA) is a signal peptide (tat-type signal). The 4Fe-4S Mo/W bis-MGD-type domain maps to 41 to 97 (LVWNKAPCRFCGTGCSVMVATRDGQVVATHGDIKAEVNRGINCVKGYFLSKIMYGSD). 4 residues coordinate [4Fe-4S] cluster: Cys-48, Cys-51, Cys-55, and Cys-83. Mo-bis(molybdopterin guanine dinucleotide)-binding positions include Lys-85, Gln-152, Asn-177, Cys-181, 214–221 (WGSNMAEM), 245–249 (STFEH), 264–266 (QTD), Met-375, Gln-379, Asn-485, 511–512 (SD), Lys-534, Asp-561, and 721–730 (TGRVLEHWHT). Phe-797 is a binding site for substrate. Positions 805 and 822 each coordinate Mo-bis(molybdopterin guanine dinucleotide).

It belongs to the prokaryotic molybdopterin-containing oxidoreductase family. NasA/NapA/NarB subfamily. Component of the periplasmic nitrate reductase NapAB complex composed of NapA and NapB. The cofactor is [4Fe-4S] cluster. It depends on Mo-bis(molybdopterin guanine dinucleotide) as a cofactor. In terms of processing, predicted to be exported by the Tat system. The position of the signal peptide cleavage has not been experimentally proven.

The protein resides in the periplasm. The enzyme catalyses 2 Fe(II)-[cytochrome] + nitrate + 2 H(+) = 2 Fe(III)-[cytochrome] + nitrite + H2O. Catalytic subunit of the periplasmic nitrate reductase complex NapAB. Receives electrons from NapB and catalyzes the reduction of nitrate to nitrite. The sequence is that of Periplasmic nitrate reductase from Pseudomonas aeruginosa (strain LESB58).